A 720-amino-acid chain; its full sequence is Receptor-like protein CLAVATA2 (720 aa).

A signal peptide spans 1–25; the sequence is MIKIADFTLFFFIFVFSPSLPLAQS. The interval 26–92 is N-cap; that stretch reads QLPDLDPQDK…LNLSSQIHPS (67 aa). Topologically, residues 26-686 are extracellular; sequence QLPDLDPQDK…QNELVEGPIS (661 aa). Asn-49, Asn-62, Asn-84, Asn-108, Asn-127, and Asn-168 each carry an N-linked (GlcNAc...) asparagine glycan. Cysteines 60 and 68 form a disulfide. LRR repeat units lie at residues 96–122, 124–144, 146–168, 170–194, 195–217, 219–238, 239–263, 264–287, 288–311, 314–338, 339–362, 364–386, 388–410, 411–436, 438–458, 459–482, 484–506, 547–571, 573–594, 595–617, and 619–641; these read LSSL…SLRN, RTLN…FVSL, ELRE…WFGN, SMNL…LLYL, KSLK…FQQP, VVLN…FYAS, RPSL…LGSL, KELS…LMFS, EKLV…ISET, KLGL…ITEL, KSLQ…IGNL, YLQV…IVGC, QLLA…LDAL, DSLK…GLKS, EIVD…ITKW, SNLK…LFKF, KIQM…NLNS, LLSM…LFRQ, NIEY…LEKL, PRLK…NISA, and PGLT…KEGL. Asn-206 carries an N-linked (GlcNAc...) asparagine glycan. Asn-270 carries an N-linked (GlcNAc...) asparagine glycan. The N-linked (GlcNAc...) asparagine glycan is linked to Asn-361. A glycan (N-linked (GlcNAc...) asparagine) is linked at Asn-398. Asn-446 carries an N-linked (GlcNAc...) asparagine glycan. Asn-505 carries an N-linked (GlcNAc...) asparagine glycan. Asn-578, Asn-614, and Asn-625 each carry an N-linked (GlcNAc...) asparagine glycan. Residues 649–682 form a C-cap/acidic domain region; the sequence is AGNPELCVETPGSKCDPANIDASQEEIYQNELVE. A helical membrane pass occupies residues 687–707; it reads IWIFCLSAFISFDFGVLGIFC. At 708 to 720 the chain is on the cytoplasmic side; the sequence is SARARSYILQTKA.

The protein belongs to the RLP family. As to quaternary structure, parts of a tetrameric complex made of two CLV2/CRN heterodimers that can interact with CLV3 and CLE peptides. CLV2/CRN heterodimer interacts with CLV1 homodimers. Interacts with CRN; this dimer can interact with BAM3. Interacts with CLE14. Mostly expressed in apices (e.g. shoot apical meristem and flower buds), and, to a lower extent, in flowers, leaves, seedlings and siliques. Also expressed in the inner tissues of the proximal root meristem. Expressed throughout the vascular cylinder of root tips.

It is found in the cell membrane. The protein localises to the endoplasmic reticulum membrane. Involved in the perception of CLV3 and CLV3-like (CLE) peptides, that act as extracellular signals regulating meristems maintenance. Required for the sensing of the root CLE peptides (e.g. CLE8, CLE9/CLE10, CLE11, CLE13, CLE14, CLE16, CLE17, CLE18, CLE20, CLE21, CLE25, CLE26, CLE40, CLE41/CLE44 and CLE45), which also involves CRN and leads to root growth regulation, mostly in the phloem and protophloem. Involved in controlling the stem cell population size in shoot and root apical meristems, and during organ development. Promotes the formation of CLV1 multimers. In complex with CRN, perceives secreted CLV3-like effector proteins from plant-parasitic cyst nematodes as ligand mimics of the plant CLE signaling pathway. This recognition is required for proper feeding structure (syncytium) development and ultimately successful nematode infection. CLE14 perception by CLV2/CRN complex triggers root meristem differentiation. This chain is Receptor-like protein CLAVATA2, found in Arabidopsis thaliana (Mouse-ear cress).